A 347-amino-acid polypeptide reads, in one-letter code: Phenylalanine--tRNA ligase alpha subunit (347 aa).

Glu-261 is a binding site for Mg(2+).

This sequence belongs to the class-II aminoacyl-tRNA synthetase family. Phe-tRNA synthetase alpha subunit type 1 subfamily. Tetramer of two alpha and two beta subunits. Mg(2+) serves as cofactor.

Its subcellular location is the cytoplasm. The enzyme catalyses tRNA(Phe) + L-phenylalanine + ATP = L-phenylalanyl-tRNA(Phe) + AMP + diphosphate + H(+). In Streptococcus thermophilus (strain CNRZ 1066), this protein is Phenylalanine--tRNA ligase alpha subunit.